A 494-amino-acid polypeptide reads, in one-letter code: UPF0371 protein SPH_0451 (494 aa).

It belongs to the UPF0371 family.

The protein is UPF0371 protein SPH_0451 of Streptococcus pneumoniae (strain Hungary19A-6).